A 91-amino-acid polypeptide reads, in one-letter code: MAQIYYVYRVTPSREDVDYEKLKQVIKGKLEPKYPVKGIEEEEIGFGIKALKIHIVTPESDEYTSDEIENILSQIEDIGGIELEYFTRVSF.

It belongs to the EF-1-beta/EF-1-delta family.

Functionally, promotes the exchange of GDP for GTP in EF-1-alpha/GDP, thus allowing the regeneration of EF-1-alpha/GTP that could then be used to form the ternary complex EF-1-alpha/GTP/AAtRNA. The sequence is that of Elongation factor 1-beta from Caldivirga maquilingensis (strain ATCC 700844 / DSM 13496 / JCM 10307 / IC-167).